The chain runs to 403 residues: Alkaline protease 1 (403 aa).

The N-terminal stretch at 1-21 (MQSIKRTLLLLGAILPAVLGA) is a signal peptide. The propeptide occupies 22–125 (PVQETRRAAE…QIYYLDGLTT (104 aa)). An Inhibitor I9 domain is found at 36–120 (KYIVTFKPGI…YVEEDQIYYL (85 aa)). Positions 130–403 (PWGLGSISHK…PNLLAYNGNA (274 aa)) constitute a Peptidase S8 domain. Catalysis depends on charge relay system residues aspartate 162 and histidine 193. Asparagine 253 carries N-linked (GlcNAc...) asparagine glycosylation. Serine 349 (charge relay system) is an active-site residue.

Belongs to the peptidase S8 family.

The protein localises to the secreted. The catalysed reaction is Hydrolysis of proteins with broad specificity, and of Bz-Arg-OEt &gt; Ac-Tyr-OEt. Does not hydrolyze peptide amides.. Its function is as follows. Secreted alkaline protease that allows assimilation of proteinaceous substrates. The chain is Alkaline protease 1 (alp1) from Aspergillus flavus (strain ATCC 200026 / FGSC A1120 / IAM 13836 / NRRL 3357 / JCM 12722 / SRRC 167).